The primary structure comprises 932 residues: DNA mismatch repair protein MutS (932 aa).

ATP is bound at residue glycine 615–serine 622.

The protein belongs to the DNA mismatch repair MutS family.

Its function is as follows. This protein is involved in the repair of mismatches in DNA. It is possible that it carries out the mismatch recognition step. This protein has a weak ATPase activity. The polypeptide is DNA mismatch repair protein MutS (Clostridium botulinum (strain Loch Maree / Type A3)).